The primary structure comprises 319 residues: Phosphoenolpyruvate transferase (319 aa).

Asp-50 contributes to the 7,8-didemethyl-8-hydroxy-5-deazariboflavin binding site.

It belongs to the CofD family. Homodimer. It depends on Mg(2+) as a cofactor.

It carries out the reaction enolpyruvoyl-2-diphospho-5'-guanosine + 7,8-didemethyl-8-hydroxy-5-deazariboflavin = dehydro coenzyme F420-0 + GMP + H(+). It functions in the pathway cofactor biosynthesis; coenzyme F420 biosynthesis. Functionally, catalyzes the transfer of the phosphoenolpyruvate moiety from enoylpyruvoyl-2-diphospho-5'-guanosine (EPPG) to 7,8-didemethyl-8-hydroxy-5-deazariboflavin (FO) with the formation of dehydro coenzyme F420-0 and GMP. In Streptomyces coelicolor (strain ATCC BAA-471 / A3(2) / M145), this protein is Phosphoenolpyruvate transferase.